We begin with the raw amino-acid sequence, 147 residues long: Protein Turandot Z (147 aa).

Residues 1 to 23 (MYFAIRLSFVLAVLICLTGNGSA) form the signal peptide.

The protein belongs to the Turandot family.

It localises to the secreted. Its function is as follows. A humoral factor that may play a role in stress tolerance. The protein is Protein Turandot Z of Drosophila melanogaster (Fruit fly).